The chain runs to 478 residues: Cytochrome c-552 (478 aa).

Residues 1–26 (MARKTLRARRFFSLIFPFFFITSVYA) form the signal peptide. His94 contacts heme c. Residues Cys122, Cys125, and Lys126 each contribute to the heme site. 6 residues coordinate heme c: Cys160, Cys163, His164, Cys209, Cys212, and His213. Residues Glu215, Tyr216, Lys261, and Gln263 each coordinate Ca(2+). Tyr216 lines the substrate pocket. His264 serves as a coordination point for substrate. The heme c site is built by His275, Cys282, Cys285, His286, His301, Cys314, Cys317, His318, and His393.

Belongs to the cytochrome c-552 family. Ca(2+) is required as a cofactor. Requires heme c as cofactor.

It is found in the periplasm. It catalyses the reaction 6 Fe(III)-[cytochrome c] + NH4(+) + 2 H2O = 6 Fe(II)-[cytochrome c] + nitrite + 8 H(+). It participates in nitrogen metabolism; nitrate reduction (assimilation). Catalyzes the reduction of nitrite to ammonia, consuming six electrons in the process. The protein is Cytochrome c-552 of Salmonella paratyphi A (strain ATCC 9150 / SARB42).